We begin with the raw amino-acid sequence, 226 residues long: Small ribosomal subunit protein uS3 (226 aa).

Positions 39–107 constitute a KH type-2 domain; the sequence is VRKFLNKELR…PAQINISEVR (69 aa).

This sequence belongs to the universal ribosomal protein uS3 family. In terms of assembly, part of the 30S ribosomal subunit. Forms a tight complex with proteins S10 and S14.

Binds the lower part of the 30S subunit head. Binds mRNA in the 70S ribosome, positioning it for translation. In Idiomarina loihiensis (strain ATCC BAA-735 / DSM 15497 / L2-TR), this protein is Small ribosomal subunit protein uS3.